We begin with the raw amino-acid sequence, 273 residues long: HUWE1-associated protein modifying stress responses 2 (273 aa).

3 disordered regions span residues 146–181 (GKVPPAPPPPRTPRTPPKPPTGVTSQAVATESSSSV), 204–230 (ISMRSGDSPQDSGVASSGRRKTSFLED), and 251–273 (KRTSAQCSDGITDSPIQKRNRMV). A compositionally biased stretch (pro residues) spans 149 to 165 (PPAPPPPRTPRTPPKPP). Composition is skewed to polar residues over residues 170–181 (SQAVATESSSSV), 208–218 (SGDSPQDSGVA), and 254–267 (SAQCSDGITDSPIQ). Residues 249–273 (IRKRTSAQCSDGITDSPIQKRNRMV) are nuclear localization signal.

It belongs to the HAPSTR1 family. In terms of assembly, homooligomer. Heterooligomer with HAPSTR1; the interaction is direct and stabilizes HAPSTR1 independently of HUWE1. Interacts with HUWE1. In terms of tissue distribution, expressed in a tissue-restricted manner compared to HAPSTR1.

It localises to the nucleus. Its function is as follows. Together with HAPSTR1 plays a central regulatory role in the cellular response to molecular stressors, such as DNA damage, nutrient scarcity, and protein misfolding. Regulates these multiple stress response signaling pathways by stabilizing HAPSTR1, but also independently of HAPSTR1. This is HUWE1-associated protein modifying stress responses 2 from Homo sapiens (Human).